Consider the following 492-residue polypeptide: uncharacterized protein (492 aa).

A helical transmembrane segment spans residues 30 to 46 (YVCLSVAVAAVGYANYM). Residues 144-210 (NYYDVLNVNE…IRKNIYDNEG (67 aa)) form the J domain.

It is found in the membrane. This is an uncharacterized protein from Plasmodium falciparum (isolate 3D7).